A 571-amino-acid chain; its full sequence is Transcription factor ABORTED MICROSPORES (571 aa).

Residues 275–284 (NDKDMNENGR) show a composition bias toward basic and acidic residues. Disordered stretches follow at residues 275–321 (NDKD…AERR), 365–390 (ELQD…MSLN), and 536–571 (DDHQ…YHNQ). A bHLH domain is found at 310-359 (GSQAKNLMAERRRRKKLNDRLYALRSLVPRITKLDRASILGDAINYVKEL). Positions 368-378 (DELEENSETED) are enriched in acidic residues. Residues 381-390 (NRPQGGMSLN) are compositionally biased toward polar residues. The segment covering 556–571 (AHHHHHHQHINHYHNQ) has biased composition (basic residues).

In terms of assembly, homodimer. Interacts with ASHR3. Mostly expressed in closed, post-meiotic buds, and, to a lower extent, in pre-meiotic buds. Detected in leaves, stems, and flowers.

Its subcellular location is the nucleus. In terms of biological role, transcription factor. Plays a crucial role in tapetum development. Required for male fertility and pollen differentiation, especially during the post-meiotic transcriptional regulation of microspore development within the developing anther. Binds E-box regions in the AHL16/TEK promoter. The polypeptide is Transcription factor ABORTED MICROSPORES (AMS) (Arabidopsis thaliana (Mouse-ear cress)).